We begin with the raw amino-acid sequence, 111 residues long: MKRTAWNIVFHSLIGLRARVLATSDPGLRGLEGVVVEETRHSLVVETRDGRRVRVLKANSIFLFQLPGGSWVVVRGEEIAGSLAERVKRLGRLKGVGWLVRAGEKRRYTRG.

The protein belongs to the eukaryotic/archaeal RNase P protein component 1 family. As to quaternary structure, consists of a catalytic RNA component and at least 4-5 protein subunits.

The protein resides in the cytoplasm. It carries out the reaction Endonucleolytic cleavage of RNA, removing 5'-extranucleotides from tRNA precursor.. Its function is as follows. Part of ribonuclease P, a protein complex that generates mature tRNA molecules by cleaving their 5'-ends. In Hyperthermus butylicus (strain DSM 5456 / JCM 9403 / PLM1-5), this protein is Ribonuclease P protein component 1.